The sequence spans 216 residues: Large ribosomal subunit protein bL21 (216 aa).

This sequence belongs to the bacterial ribosomal protein bL21 family. Part of the 50S ribosomal subunit. Contacts protein L20.

Its function is as follows. This protein binds to 23S rRNA in the presence of protein L20. The sequence is that of Large ribosomal subunit protein bL21 from Roseobacter denitrificans (strain ATCC 33942 / OCh 114) (Erythrobacter sp. (strain OCh 114)).